A 225-amino-acid chain; its full sequence is RNA-binding protein 24-A (225 aa).

The region spanning 11-88 (TKIFVGGLPY…RKANVNLAYL (78 aa)) is the RRM domain.

The protein localises to the nucleus. The protein resides in the cytoplasm. Its function is as follows. Multifunctional RNA-binding protein involved in the regulation of pre-mRNA splicing, mRNA stability and mRNA translation important for cell fate decision and differentiation. Plays a major role in pre-mRNA alternative splicing regulation. Mediates preferentially muscle-specific exon inclusion in numerous mRNAs important for striated cardiac and skeletal muscle cell differentiation. Binds to intronic splicing enhancer (ISE) composed of stretches of GU-rich motifs localized in flanking intron of exon that will be included by alternative splicing. Involved in embryonic stem cell (ESC) transition to cardiac cell differentiation by promoting pre-mRNA alternative splicing events of several pluripotency and/or differentiation genes. Plays a role in the regulation of mRNA stability and mRNA translation to which it is bound. Involved in myogenic differentiation by regulating myog levels. Binds to a huge amount of mRNAs. Required for embryonic heart development, sarcomer and M-band formation in striated muscles. This is RNA-binding protein 24-A (rbm24-a) from Xenopus laevis (African clawed frog).